We begin with the raw amino-acid sequence, 892 residues long: Alanine--tRNA ligase (892 aa).

Residues His-574, His-578, Cys-676, and His-680 each coordinate Zn(2+).

Belongs to the class-II aminoacyl-tRNA synthetase family. The cofactor is Zn(2+).

The protein resides in the cytoplasm. The catalysed reaction is tRNA(Ala) + L-alanine + ATP = L-alanyl-tRNA(Ala) + AMP + diphosphate. Its function is as follows. Catalyzes the attachment of alanine to tRNA(Ala) in a two-step reaction: alanine is first activated by ATP to form Ala-AMP and then transferred to the acceptor end of tRNA(Ala). Also edits incorrectly charged Ser-tRNA(Ala) and Gly-tRNA(Ala) via its editing domain. The protein is Alanine--tRNA ligase of Prochlorococcus marinus (strain MIT 9303).